A 335-amino-acid polypeptide reads, in one-letter code: MTEVYDFDQSSWYTKGSLAPILPTTYPDGRLIPQVRVIDPGLGDRKDECFMYIFLMGIIEDNDGLGPPIGRTFGSLPLGVGRTTARPEELLKEATLLDIMVRRTAGVKEQLVFYNNTPLHILTPWKKVLTSGSVFSANQVCNTVNLIPLDIAQRFRVVYMSITRLSDDGSYRIPRGVFEFRSRNALAFNILVTIRVEGDVDSSRGNLGMFKDYQATFMVHIGNFSRKKNQAYSADYCKLKIEKMGLVFALGGIGGTSLHIRCTGKMSKALNAQLGFKKILCYPLMEINEDLNRFLWRSECKIVRIQAVLQPSVPQDFRVYNDVIISDDQGLFKIL.

This sequence belongs to the morbillivirus/respirovirus/rubulavirus M protein family.

It is found in the virion. Its function is as follows. The M protein has a crucial role in virus assembly and interacts with the RNP complex as well as with the viral membrane. The sequence is that of Matrix protein (M) from Ailuropoda melanoleuca (Giant panda).